A 699-amino-acid polypeptide reads, in one-letter code: Elongation factor G (699 aa).

The tr-type G domain occupies 8 to 288; the sequence is EDYRNFGIMA…AVVDYLPSPM (281 aa). Residues 17–24, 86–90, and 140–143 contribute to the GTP site; these read AHIDAGKT, DTPGH, and NKMD.

The protein belongs to the TRAFAC class translation factor GTPase superfamily. Classic translation factor GTPase family. EF-G/EF-2 subfamily.

Its subcellular location is the cytoplasm. Functionally, catalyzes the GTP-dependent ribosomal translocation step during translation elongation. During this step, the ribosome changes from the pre-translocational (PRE) to the post-translocational (POST) state as the newly formed A-site-bound peptidyl-tRNA and P-site-bound deacylated tRNA move to the P and E sites, respectively. Catalyzes the coordinated movement of the two tRNA molecules, the mRNA and conformational changes in the ribosome. The polypeptide is Elongation factor G (Rhizobium johnstonii (strain DSM 114642 / LMG 32736 / 3841) (Rhizobium leguminosarum bv. viciae)).